The following is a 243-amino-acid chain: Probable phosphatase CLD_1129 (243 aa).

Residues His8, His10, His16, His41, Glu74, His102, His132, Asp192, and His194 each coordinate Zn(2+).

This sequence belongs to the PHP family. The cofactor is Zn(2+).

This Clostridium botulinum (strain Okra / Type B1) protein is Probable phosphatase CLD_1129.